A 122-amino-acid polypeptide reads, in one-letter code: Large ribosomal subunit protein uL18 (122 aa).

It belongs to the universal ribosomal protein uL18 family. As to quaternary structure, part of the 50S ribosomal subunit; part of the 5S rRNA/L5/L18/L25 subcomplex. Contacts the 5S and 23S rRNAs.

This is one of the proteins that bind and probably mediate the attachment of the 5S RNA into the large ribosomal subunit, where it forms part of the central protuberance. This is Large ribosomal subunit protein uL18 from Thermotoga petrophila (strain ATCC BAA-488 / DSM 13995 / JCM 10881 / RKU-1).